The following is a 59-amino-acid chain: MAKTIKITQTRSAIGRLPKHKATLLGLGLRRIGHTVEREDTPAIRGMINAVSFMVKVEE.

The protein belongs to the universal ribosomal protein uL30 family. In terms of assembly, part of the 50S ribosomal subunit.

This is Large ribosomal subunit protein uL30 from Escherichia coli (strain UTI89 / UPEC).